The sequence spans 342 residues: MIKVGIVGGTGYTGVELLRLLSRHPDVELTAITSRKEAGLRVDAMYPSLRGWVDLAFTTPDEANLAGCDVVFFATPNGIAMQEAVRLVEAGVRVIDLAADFRIKDIAEWEKWYGMTHASPQLVAEAVYGLPEINRDAVRTARVVANPGCYPTAVQLGFLPLIEAEAIDPASLIADCKSGVSGAGRKAEVHTLFAEATDSFKAYGVAGHRHLPEIRQGLAAVAGQPVGLTFVPHLTPMVRGIHATLYARLKKDVDLQGLFESRYAGERFVDVLPAGSCPETRSVRGSNTCRIAVHRPQGSDTVVVLSVIDNLVKGAAGQAVQNLNLMFGLPESTGLEIVPLMP.

Residue Cys-149 is part of the active site.

The protein belongs to the NAGSA dehydrogenase family. Type 1 subfamily.

It localises to the cytoplasm. It carries out the reaction N-acetyl-L-glutamate 5-semialdehyde + phosphate + NADP(+) = N-acetyl-L-glutamyl 5-phosphate + NADPH + H(+). The protein operates within amino-acid biosynthesis; L-arginine biosynthesis; N(2)-acetyl-L-ornithine from L-glutamate: step 3/4. Catalyzes the NADPH-dependent reduction of N-acetyl-5-glutamyl phosphate to yield N-acetyl-L-glutamate 5-semialdehyde. The chain is N-acetyl-gamma-glutamyl-phosphate reductase from Laribacter hongkongensis (strain HLHK9).